The primary structure comprises 637 residues: GTPase-activating protein GYP1 (637 aa).

The segment covering 1–17 (MGVRSAAKEMHERDHNS) has biased composition (basic and acidic residues). Disordered regions lie at residues 1 to 152 (MGVR…GDRY) and 187 to 233 (RTLS…NDSK). Residues 18–27 (DSSSLVTSLM) show a composition bias toward polar residues. Positions 28–45 (KSWRISSASSSKKPSLYK) are enriched in low complexity. The segment covering 46 to 59 (MNTTESTSLPSGYA) has biased composition (polar residues). S69 carries the phosphoserine modification. Polar residues-rich tracts occupy residues 79–91 (QQAS…NSYS) and 98–107 (PTLSTASNES). A compositionally biased stretch (basic residues) spans 115 to 127 (RQHHQRHHHHQQP). Low complexity-rich tracts occupy residues 128–142 (RHSS…CSNS) and 187–207 (RTLS…MGTS). Polar residues predominate over residues 208-223 (AVRNSSSSFTYPQLPQ). The residue at position 250 (S250) is a Phosphoserine. In terms of domain architecture, Rab-GAP TBC spans 280–508 (GIPKIHRPVV…RMWDTYLSET (229 aa)). The interval 543–564 (DFQSPTTALSNMTPNNAVEDSG) is disordered.

It localises to the golgi apparatus. Its subcellular location is the golgi stack. GTPase-activating protein (GAP) that stimulates specifically the intrinsic GTPase activity of Ypt/Rab-type GTPases YPT1 and YPT7. Functions on the Golgi as a negative regulator of YPT1. Functions on the vacuole as a negative regulator of YPT7. It is also active on SEC4 and YPT51. Provides a catalytic arginine (arginine finger) and glutamine (glutamine finger) in trans to accelerate the GTP hydrolysis rate of the substrate GTPase. The protein is GTPase-activating protein GYP1 (GYP1) of Saccharomyces cerevisiae (strain ATCC 204508 / S288c) (Baker's yeast).